The sequence spans 690 residues: MADYLVIVESPAKAKTIGKYLGKKYTVKASMGHVRDLPKSQMGVDIEDEYSPRYITIRGKGPVLKELKSAAKKVKRVYLAADPDREGEAIAWHLAHSLDIDETSECRVVFNEITKQAIKDAFKSPRPINMDLVDAQQARRVLDRLVGYNISPLLWKKVKKGLSAGRVQSVAVKMIIDREKEIQAFEPEEYWSIQGTFALDGEPFEAKFYGTNGKKVELKSEDDVNNVLAKLKGDQFHVDSVQKKERKRNPVSPFTTSSLQQEAARKLNFRAKKTMMLAQQLYEGIDLGKEGTVGLITYMRTDSTRISDTAKAETKEYIESKFGKEYAQNGTKAVKKDKKSQDAHEAIRPTSVERDPKSLKEYLSRDQLRLYKLIWERLVASQMAPAIMDTMTVDLSNEGVLFRATGSKVKFPGFMKVYIEGNDEGKKEEDRLLPNLQEGQTVTKEEIEPSQHFTQPPPRYTEARLVKTMEELGIGRPSTYAPTLDTIQKRGYVALDERRFVPTELGEIVLELMTEFFPEILDVEFTAKMEDDLDSIEEGKQQWIKIIDDFYKGFEERLKVAEEEMKEVEIKDEPTGEMCEKCGHEMVYKMGRYGKFMACSNFPDCRNTKPIVKEIGVKCPKCEKGEIVERKSKKRRVFYGCNQYPECDFVSWDKPIARSCPKCSSYLVEKRTKKQVQVQCSSCDYKEEAN.

Positions 3–121 constitute a Toprim domain; that stretch reads DYLVIVESPA…EITKQAIKDA (119 aa). Mg(2+) contacts are provided by E9 and D82. A Topo IA-type catalytic domain is found at 129 to 558; it reads NMDLVDAQQA…DFYKGFEERL (430 aa). Residues 163 to 168 form an interaction with DNA region; that stretch reads SAGRVQ. Y298 functions as the O-(5'-phospho-DNA)-tyrosine intermediate in the catalytic mechanism. Residues 329-354 form a disordered region; the sequence is NGTKAVKKDKKSQDAHEAIRPTSVER. The segment covering 339–354 has biased composition (basic and acidic residues); the sequence is KSQDAHEAIRPTSVER. C4-type zinc fingers lie at residues 579–605, 619–647, and 660–683; these read CEKC…FPDC, CPKC…YPEC, and CPKC…CSSC.

It belongs to the type IA topoisomerase family. Monomer. Requires Mg(2+) as cofactor.

The catalysed reaction is ATP-independent breakage of single-stranded DNA, followed by passage and rejoining.. Releases the supercoiling and torsional tension of DNA, which is introduced during the DNA replication and transcription, by transiently cleaving and rejoining one strand of the DNA duplex. Introduces a single-strand break via transesterification at a target site in duplex DNA. The scissile phosphodiester is attacked by the catalytic tyrosine of the enzyme, resulting in the formation of a DNA-(5'-phosphotyrosyl)-enzyme intermediate and the expulsion of a 3'-OH DNA strand. The free DNA strand then undergoes passage around the unbroken strand, thus removing DNA supercoils. Finally, in the religation step, the DNA 3'-OH attacks the covalent intermediate to expel the active-site tyrosine and restore the DNA phosphodiester backbone. This chain is DNA topoisomerase 1, found in Halalkalibacterium halodurans (strain ATCC BAA-125 / DSM 18197 / FERM 7344 / JCM 9153 / C-125) (Bacillus halodurans).